A 133-amino-acid polypeptide reads, in one-letter code: Profilin Sal k 4.0301 (133 aa).

The cysteines at positions 95 and 117 are disulfide-linked.

Belongs to the profilin family. Occurs in many kinds of cells as a complex with monomeric actin in a 1:1 ratio. As to expression, expressed in pollen (at protein and mRNA level).

Its subcellular location is the cytoplasm. It localises to the cytoskeleton. Functionally, binds to actin and affects the structure of the cytoskeleton. At high concentrations, profilin prevents the polymerization of actin, whereas it enhances it at low concentrations. This is Profilin Sal k 4.0301 from Kali turgidum (Prickly saltwort).